The following is a 263-amino-acid chain: Phosphoinositide-3-kinase-interacting protein 1 (263 aa).

An N-terminal signal peptide occupies residues 1 to 21 (MLLAWVQAFLVSNMLLAEAYG). The Extracellular segment spans residues 22-168 (SGGCFWDNGH…NSKEKKDLGT (147 aa)). In terms of domain architecture, Kringle spans 24–101 (GCFWDNGHLY…EKRPCENLSC (78 aa)). 3 disulfide bridges follow: Cys-25–Cys-101, Cys-46–Cys-82, and Cys-70–Cys-96. Asn-98 carries an N-linked (GlcNAc...) asparagine glycan. Residues 169-189 (LGYVLGITMMVIIVAIGAGII) traverse the membrane as a helical segment. The Cytoplasmic portion of the chain corresponds to 190–263 (LGYSYKRGKD…LMGQAGTPGA (74 aa)). Residues 242–251 (QTPVDPQEGS) are compositionally biased toward polar residues. A disordered region spans residues 242-263 (QTPVDPQEGSTPLMGQAGTPGA).

Its subcellular location is the cell membrane. Its function is as follows. Negative regulator of hepatic phosphatidylinositol 3-kinase (PI3K) activity. The sequence is that of Phosphoinositide-3-kinase-interacting protein 1 (PIK3IP1) from Pongo abelii (Sumatran orangutan).